We begin with the raw amino-acid sequence, 372 residues long: Alpha-L-fucosidase 3 (372 aa).

A signal peptide spans 1 to 23; sequence MNPILSSLFALSLLSSLSPSTHA. The active-site Nucleophile is Ser-37. Asn-96, Asn-114, Asn-139, and Asn-182 each carry an N-linked (GlcNAc...) asparagine glycan. Catalysis depends on residues Asp-345 and His-348.

This sequence belongs to the 'GDSL' lipolytic enzyme family. As to expression, high expression in younger leaves and in the apical region of the inflorescence stem.

It is found in the secreted. Its subcellular location is the extracellular space. The protein resides in the apoplast. It carries out the reaction an alpha-L-fucoside + H2O = L-fucose + an alcohol. In terms of biological role, hydrolyzes alpha-1,2-linked fucose. Also active on fucosylated xyloglucan oligosaccharides. This chain is Alpha-L-fucosidase 3 (FXG1), found in Arabidopsis thaliana (Mouse-ear cress).